We begin with the raw amino-acid sequence, 306 residues long: UDP-N-acetylenolpyruvoylglucosamine reductase (306 aa).

In terms of domain architecture, FAD-binding PCMH-type spans 25 to 188 (RVGGPADWLF…IEARFRAEPG (164 aa)). Arg-168 is a catalytic residue. The span at 199–214 (EQLARRDASQPTKDRS) shows a compositional bias: basic and acidic residues. Residues 199–232 (EQLARRDASQPTKDRSAGSTFRNPAGYSSTGRAD) are disordered. Over residues 215-229 (AGSTFRNPAGYSSTG) the composition is skewed to polar residues. The active-site Proton donor is the Ser-217. Glu-299 is an active-site residue.

Belongs to the MurB family. The cofactor is FAD.

Its subcellular location is the cytoplasm. The catalysed reaction is UDP-N-acetyl-alpha-D-muramate + NADP(+) = UDP-N-acetyl-3-O-(1-carboxyvinyl)-alpha-D-glucosamine + NADPH + H(+). It functions in the pathway cell wall biogenesis; peptidoglycan biosynthesis. Its function is as follows. Cell wall formation. The polypeptide is UDP-N-acetylenolpyruvoylglucosamine reductase (Paracoccus denitrificans (strain Pd 1222)).